Consider the following 138-residue polypeptide: Large ribosomal subunit protein uL16 (138 aa).

Residues 1-19 (MLIPKRVKYRRQHRPHRSG) are compositionally biased toward basic residues. The disordered stretch occupies residues 1-24 (MLIPKRVKYRRQHRPHRSGVSKGG).

This sequence belongs to the universal ribosomal protein uL16 family. As to quaternary structure, part of the 50S ribosomal subunit.

Functionally, binds 23S rRNA and is also seen to make contacts with the A and possibly P site tRNAs. In Corynebacterium jeikeium (strain K411), this protein is Large ribosomal subunit protein uL16.